The following is a 355-amino-acid chain: DNA polymerase IV (355 aa).

In terms of domain architecture, UmuC spans 7–188; that stretch reads IIHIDMDCFY…LPVRKLFGVG (182 aa). 2 residues coordinate Mg(2+): Asp-11 and Asp-106. Residue Glu-107 is part of the active site.

This sequence belongs to the DNA polymerase type-Y family. Monomer. It depends on Mg(2+) as a cofactor.

Its subcellular location is the cytoplasm. The catalysed reaction is DNA(n) + a 2'-deoxyribonucleoside 5'-triphosphate = DNA(n+1) + diphosphate. Its function is as follows. Poorly processive, error-prone DNA polymerase involved in untargeted mutagenesis. Copies undamaged DNA at stalled replication forks, which arise in vivo from mismatched or misaligned primer ends. These misaligned primers can be extended by PolIV. Exhibits no 3'-5' exonuclease (proofreading) activity. May be involved in translesional synthesis, in conjunction with the beta clamp from PolIII. The sequence is that of DNA polymerase IV from Legionella pneumophila (strain Corby).